The primary structure comprises 539 residues: uncharacterized protein (539 aa).

Belongs to the transposase 25 family.

This is an uncharacterized protein from Sinorhizobium fredii (strain NBRC 101917 / NGR234).